The primary structure comprises 320 residues: Cytochrome f (320 aa).

The first 35 residues, 1-35, serve as a signal peptide directing secretion; that stretch reads MQTRNTFSWIREEITRSISVSLMIYIITWASISSA. The heme site is built by Y36, C56, C59, and H60. The chain crosses the membrane as a helical span at residues 286–306; sequence VQGLLFFLGSVVLAQIFLVLK.

Belongs to the cytochrome f family. In terms of assembly, the 4 large subunits of the cytochrome b6-f complex are cytochrome b6, subunit IV (17 kDa polypeptide, petD), cytochrome f and the Rieske protein, while the 4 small subunits are PetG, PetL, PetM and PetN. The complex functions as a dimer. The cofactor is heme.

Its subcellular location is the plastid. The protein localises to the chloroplast thylakoid membrane. Its function is as follows. Component of the cytochrome b6-f complex, which mediates electron transfer between photosystem II (PSII) and photosystem I (PSI), cyclic electron flow around PSI, and state transitions. In Crucihimalaya wallichii (Rock-cress), this protein is Cytochrome f.